The sequence spans 287 residues: mRNA-capping enzyme small subunit (287 aa).

Heterodimer of a large and a small subunit.

It is found in the virion. The catalysed reaction is a 5'-end (5'-triphosphoguanosine)-ribonucleoside in mRNA + S-adenosyl-L-methionine = a 5'-end (N(7)-methyl 5'-triphosphoguanosine)-ribonucleoside in mRNA + S-adenosyl-L-homocysteine. Functionally, catalyzes the last reaction in the mRNA cap formation pathway. This is mRNA-capping enzyme small subunit from Sus scrofa (Pig).